Consider the following 680-residue polypeptide: DNA-directed RNA polymerase subunit beta' (680 aa).

The Zn(2+) site is built by C69, C71, C87, and C90. 3 residues coordinate Mg(2+): D489, D491, and D493.

It belongs to the RNA polymerase beta' chain family. RpoC1 subfamily. As to quaternary structure, in plastids the minimal PEP RNA polymerase catalytic core is composed of four subunits: alpha, beta, beta', and beta''. When a (nuclear-encoded) sigma factor is associated with the core the holoenzyme is formed, which can initiate transcription. Mg(2+) serves as cofactor. Zn(2+) is required as a cofactor.

The protein resides in the plastid. It localises to the chloroplast. The enzyme catalyses RNA(n) + a ribonucleoside 5'-triphosphate = RNA(n+1) + diphosphate. Its function is as follows. DNA-dependent RNA polymerase catalyzes the transcription of DNA into RNA using the four ribonucleoside triphosphates as substrates. In Lobularia maritima (Sweet alyssum), this protein is DNA-directed RNA polymerase subunit beta'.